The sequence spans 981 residues: Beta-glucuronidase (981 aa).

The active-site Nucleophile is the E500. Positions 561, 562, 563, 581, and 583 each coordinate Mg(2+).

This sequence belongs to the glycosyl hydrolase 2 family.

The protein resides in the periplasm. It carries out the reaction a beta-D-glucuronoside + H2O = D-glucuronate + an alcohol. Functionally, beta-glucuronidase involved in ulvan degradation. Ulvan is the main polysaccharide component of the Ulvales (green seaweed) cell wall. It is composed of disaccharide building blocks comprising 3-sulfated rhamnose (Rha3S) linked to D-glucuronic acid (GlcA), L-iduronic acid (IduA), or D-xylose (Xyl). Beta-glucuronidase removes GlcA side chains present on some O2 residues of Rha3S. Can remove the GlcA side chains from polymeric ulvan or from smaller oligomers. This chain is Beta-glucuronidase, found in Formosa agariphila (strain DSM 15362 / KCTC 12365 / LMG 23005 / KMM 3901 / M-2Alg 35-1).